Reading from the N-terminus, the 1161-residue chain is Lateral signaling target protein 2 homolog (1161 aa).

6 disordered regions span residues 417 to 510 (ATGS…EVDD), 583 to 831 (AAGS…PTQS), 890 to 918 (MNSSPPEPDEPPEPSGSEEESKDSQHNHP), 935 to 978 (DQQN…SVES), 992 to 1014 (SSPVGAGGAGGGGMVGGSRTGQE), and 1029 to 1095 (GKAS…EPPR). Residues 419–429 (GSSGFGSGRGG) show a composition bias toward gly residues. Basic residues predominate over residues 438–453 (PKQRHNQAHLRQRGAP). Basic and acidic residues predominate over residues 468–487 (GDDREPVVEEDNNNHLRKEI). Acidic residues predominate over residues 488-510 (EEEDVDDDMEEEEEDEEEDEVDD). Residues 583–601 (AAGSGGQQQQQQQQQLIDS) show a composition bias toward low complexity. Residues 669 to 704 (SDYEEADVDDEPDDVDADDDDEEEDDVVGEVEEQND) are compositionally biased toward acidic residues. The span at 728–742 (KAARNHRKSSHHRPR) shows a compositional bias: basic residues. Residues 743 to 757 (PSTSSSSSSAAYRNK) show a composition bias toward low complexity. Over residues 758 to 773 (SQSHQHHHHHHHHHHH) the composition is skewed to basic residues. Composition is skewed to low complexity over residues 781-800 (GTSSVVSTITTSNNSTSNGS) and 807-831 (MQQQHQQHQQQRNSSSSCDTSPTQS). Residues 896 to 910 (EPDEPPEPSGSEEES) show a composition bias toward acidic residues. Composition is skewed to polar residues over residues 935-948 (DQQNHSGGSSQSIY) and 956-967 (EQDSVFGSSGDS). Positions 996 to 1010 (GAGGAGGGGMVGGSR) are enriched in gly residues. The span at 1054 to 1065 (SRSSPSSPVNSN) shows a compositional bias: low complexity. A compositionally biased stretch (basic and acidic residues) spans 1081–1094 (TAHEQQRRMPEEPP). An FYVE-type zinc finger spans residues 1099–1159 (DCDAPRCMAC…VCRDCYIHEV (61 aa)). The Zn(2+) site is built by Cys1105, Cys1108, Cys1121, Cys1124, Cys1129, Cys1132, Cys1151, and Cys1154.

The protein belongs to the lst-2 family.

Its function is as follows. Negative regulator of epidermal growth factor receptor (EGFR) signaling. The polypeptide is Lateral signaling target protein 2 homolog (Anopheles gambiae (African malaria mosquito)).